A 381-amino-acid chain; its full sequence is Chaperone protein DnaJ (381 aa).

Residues 5-70 (DYYEVLGLQK…QKRAAYDQYG (66 aa)) enclose the J domain. A CR-type zinc finger spans residues 133–211 (GTTKDIQINT…CHGEGRVHKK (79 aa)). Positions 146, 149, 163, 166, 185, 188, 199, and 202 each coordinate Zn(2+). CXXCXGXG motif repeat units follow at residues 146–153 (CDSCGGSG), 163–170 (CPHCHGSG), 185–192 (CPTCHGSG), and 199–206 (CRSCHGEG).

It belongs to the DnaJ family. In terms of assembly, homodimer. Zn(2+) is required as a cofactor.

It is found in the cytoplasm. Participates actively in the response to hyperosmotic and heat shock by preventing the aggregation of stress-denatured proteins and by disaggregating proteins, also in an autonomous, DnaK-independent fashion. Unfolded proteins bind initially to DnaJ; upon interaction with the DnaJ-bound protein, DnaK hydrolyzes its bound ATP, resulting in the formation of a stable complex. GrpE releases ADP from DnaK; ATP binding to DnaK triggers the release of the substrate protein, thus completing the reaction cycle. Several rounds of ATP-dependent interactions between DnaJ, DnaK and GrpE are required for fully efficient folding. Also involved, together with DnaK and GrpE, in the DNA replication of plasmids through activation of initiation proteins. In Haemophilus influenzae (strain 86-028NP), this protein is Chaperone protein DnaJ.